A 233-amino-acid chain; its full sequence is Forkhead box protein L3 (233 aa).

A DNA-binding region (fork-head) is located at residues 32–130; it reads RPAYSYIALI…ENGNYRRRRR (99 aa). The segment covering 125–134 has biased composition (basic residues); that stretch reads YRRRRRRRGP. A disordered region spans residues 125 to 198; the sequence is YRRRRRRRGP…PRDLKFSIDY (74 aa). The span at 175-184 shows a compositional bias: pro residues; it reads REPPASPAPP. The segment covering 185–194 has biased composition (basic and acidic residues); that stretch reads GKEHPRDLKF.

It is found in the nucleus. Probable transcriptional regulator. The polypeptide is Forkhead box protein L3 (Homo sapiens (Human)).